A 351-amino-acid chain; its full sequence is Geranylgeranyl pyrophosphate synthase (351 aa).

Isopentenyl diphosphate-binding residues include lysine 55, arginine 58, and glutamine 93. Mg(2+) is bound by residues aspartate 100 and aspartate 104. A dimethylallyl diphosphate-binding site is contributed by arginine 109. Isopentenyl diphosphate is bound at residue arginine 110. Residues lysine 196, threonine 197, glutamine 236, lysine 253, and lysine 262 each contribute to the dimethylallyl diphosphate site.

This sequence belongs to the FPP/GGPP synthase family. As to quaternary structure, interacts with fps1. Requires Mg(2+) as cofactor.

Its subcellular location is the cytoplasm. The protein localises to the nucleus. The enzyme catalyses isopentenyl diphosphate + dimethylallyl diphosphate = (2E)-geranyl diphosphate + diphosphate. It catalyses the reaction isopentenyl diphosphate + (2E)-geranyl diphosphate = (2E,6E)-farnesyl diphosphate + diphosphate. The catalysed reaction is isopentenyl diphosphate + (2E,6E)-farnesyl diphosphate = (2E,6E,10E)-geranylgeranyl diphosphate + diphosphate. It participates in isoprenoid biosynthesis; farnesyl diphosphate biosynthesis; farnesyl diphosphate from geranyl diphosphate and isopentenyl diphosphate: step 1/1. The protein operates within isoprenoid biosynthesis; geranyl diphosphate biosynthesis; geranyl diphosphate from dimethylallyl diphosphate and isopentenyl diphosphate: step 1/1. Its pathway is isoprenoid biosynthesis; geranylgeranyl diphosphate biosynthesis; geranylgeranyl diphosphate from farnesyl diphosphate and isopentenyl diphosphate: step 1/1. Its function is as follows. Catalyzes the trans-addition of the 3 molecules of IPP onto DMAPP to form geranylgeranyl pyrophosphate. Required for the membrane attachment of ypt7 and rhb1. May be involved in vesicle trafficking and protein sorting. Required for forespore membrane formation. This chain is Geranylgeranyl pyrophosphate synthase (spo9), found in Schizosaccharomyces pombe (strain 972 / ATCC 24843) (Fission yeast).